Here is a 257-residue protein sequence, read N- to C-terminus: Probable enoyl-CoA hydratase echA17 (257 aa).

It belongs to the enoyl-CoA hydratase/isomerase family.

It carries out the reaction a (3S)-3-hydroxyacyl-CoA = a (2E)-enoyl-CoA + H2O. The enzyme catalyses a 4-saturated-(3S)-3-hydroxyacyl-CoA = a (3E)-enoyl-CoA + H2O. Could possibly oxidize fatty acids using specific components. In Mycolicibacterium paratuberculosis (strain ATCC BAA-968 / K-10) (Mycobacterium paratuberculosis), this protein is Probable enoyl-CoA hydratase echA17 (echA17).